Reading from the N-terminus, the 452-residue chain is uncharacterized protein (452 aa).

The TRAM domain occupies 3–61 (KVKIGEKYEVDITSMGHEGEGVGRIDGIAVFVKGALKGERVIVEIEEVHKNYLKGYTVK). Positions 74, 80, 83, and 160 each coordinate [4Fe-4S] cluster. Q284, Y313, E334, and D382 together coordinate S-adenosyl-L-methionine. Catalysis depends on C409, which acts as the Nucleophile.

This sequence belongs to the class I-like SAM-binding methyltransferase superfamily. RNA M5U methyltransferase family.

This is an uncharacterized protein from Caldanaerobacter subterraneus subsp. tengcongensis (strain DSM 15242 / JCM 11007 / NBRC 100824 / MB4) (Thermoanaerobacter tengcongensis).